Consider the following 93-residue polypeptide: RNA-binding protein Hfq (93 aa).

The region spanning 9–68 is the Sm domain; the sequence is DPYLNALRRERIPVSIYLVNGIKLQGQIESFDQFVILLKNTVSQMVYKHAISTVVPARAI. Positions 70–81 are enriched in low complexity; that stretch reads HNNNSNHAHQAA. The disordered stretch occupies residues 70–93; it reads HNNNSNHAHQAAPVQSAEVVEKVE.

This sequence belongs to the Hfq family. Homohexamer.

Its function is as follows. RNA chaperone that binds small regulatory RNA (sRNAs) and mRNAs to facilitate mRNA translational regulation in response to envelope stress, environmental stress and changes in metabolite concentrations. Also binds with high specificity to tRNAs. This is RNA-binding protein Hfq from Glaesserella parasuis serovar 5 (strain SH0165) (Haemophilus parasuis).